A 124-amino-acid polypeptide reads, in one-letter code: Large ribosomal subunit protein bL12 (124 aa).

It belongs to the bacterial ribosomal protein bL12 family. In terms of assembly, homodimer. Part of the ribosomal stalk of the 50S ribosomal subunit. Forms a multimeric L10(L12)X complex, where L10 forms an elongated spine to which 2 to 4 L12 dimers bind in a sequential fashion. Binds GTP-bound translation factors.

In terms of biological role, forms part of the ribosomal stalk which helps the ribosome interact with GTP-bound translation factors. Is thus essential for accurate translation. This chain is Large ribosomal subunit protein bL12, found in Ralstonia pickettii (strain 12J).